The following is a 441-amino-acid chain: MATANIAIKQNSSTNIAFIERMPSPSLHRILYNLFSKFSYSLSNSCHFNLKCLNFVMNRMFHMSMEDLSQCTILIVDDSPDNIAFMSQGLAQYYRIKAARSGKVALEILAQYPIDLVLLDIVMPEMSGYEVINQIKHNPHTEHIPVIFLTGKSNPEDEQLGFELGAVDYVFKPVSIPLLKSRVHTHLQNKRSKDILLNQNDYLETEVLRRSGELDRMQDAVVFALASLAETRDPETGNHLLRTQHYVKVLAQRLATTDKYRDVLSPTVIDTYFKAAPLHDIGKVGIPDNILLKPGKLTPDEFTTMRNHALLGKLALEKAEKLSGACTALINVAKEIAMGHHEKWDGSGYPLGLKGDDIPLSARLMALADVYDALICRRVYKEPMSHEEAKAIILQGRGSHFDPMVIDAFLIEEQNFIDIAQKFADEESAMVPIQLGQQASG.

Positions 72–187 (TILIVDDSPD…LLKSRVHTHL (116 aa)) constitute a Response regulatory domain. The residue at position 120 (Asp120) is a 4-aspartylphosphate. One can recognise an HD-GYP domain in the interval 214 to 425 (LDRMQDAVVF…FIDIAQKFAD (212 aa)).

The enzyme catalyses 3',3'-c-di-GMP + 2 H2O = 2 GMP + 2 H(+). Probable phosphodiesterase (PDE) that catalyzes the hydrolysis of cyclic diguanylate (c-di-GMP). Increases motility and decreases biofilm formation in vivo. In Vibrio cholerae serotype O1 (strain ATCC 39315 / El Tor Inaba N16961), this protein is Probable cyclic di-GMP phosphodiesterase VC_1348.